The sequence spans 428 residues: MSTVVIIGAQWGDEGKGKITDFLAEKAEIIVRYQGGNNAGHTVVVDDAEFKLHLIPSGILHPEKLCVIGNGVVIDPQVLKQELDSLAERGVKTGRLCVSQRSHIIMPYHRKMDAVEEEQKGEGKIGTTKRGIGPTYTDKASRVGIRVVDLIDKEEFPKLLKNNIECKNEIFEKLYNTKGFEYEEVLKEYQGYAEMLEPMTEDVSVLVHNAIKEGKNVLFEGAQGTLLDLDHGTYPYVTSSHPTAAAACLGSGVGPTKINRALGIVKAYTTRVGEGPFPTELNDGLGEEIRKNGNEYGTTTGRPRRCGWFDAVIVRYAARISGLDSLAITKLDVLSGLPVIKLCSGYRYKGEIIREFPASLKELAKCEPVYEDFPGWSEDISNVTRYEDLPENAKRYLERIVELTEVKISLISVGVKRSQTIILEDLFN.

Residues 12–18 and 40–42 each bind GTP; these read GDEGKGK and GHT. The active-site Proton acceptor is the Asp13. Mg(2+) contacts are provided by Asp13 and Gly40. Residues 13 to 16, 38 to 41, Thr128, Arg142, Gln223, Thr238, and Arg302 each bind IMP; these read DEGK and NAGH. His41 serves as the catalytic Proton donor. 298-304 contributes to the substrate binding site; the sequence is TTTGRPR. GTP is bound by residues Arg304, 330-332, and 412-414; these read KLD and SVG.

Belongs to the adenylosuccinate synthetase family. As to quaternary structure, homodimer. Requires Mg(2+) as cofactor.

The protein localises to the cytoplasm. The catalysed reaction is IMP + L-aspartate + GTP = N(6)-(1,2-dicarboxyethyl)-AMP + GDP + phosphate + 2 H(+). It participates in purine metabolism; AMP biosynthesis via de novo pathway; AMP from IMP: step 1/2. Plays an important role in the de novo pathway of purine nucleotide biosynthesis. Catalyzes the first committed step in the biosynthesis of AMP from IMP. This chain is Adenylosuccinate synthetase, found in Desulforamulus reducens (strain ATCC BAA-1160 / DSM 100696 / MI-1) (Desulfotomaculum reducens).